Reading from the N-terminus, the 229-residue chain is DNA repair protein RecO (229 aa).

The protein belongs to the RecO family.

In terms of biological role, involved in DNA repair and RecF pathway recombination. The polypeptide is DNA repair protein RecO (Legionella pneumophila subsp. pneumophila (strain Philadelphia 1 / ATCC 33152 / DSM 7513)).